An 89-amino-acid chain; its full sequence is Small ribosomal subunit protein bS20 (89 aa).

Belongs to the bacterial ribosomal protein bS20 family.

Binds directly to 16S ribosomal RNA. The polypeptide is Small ribosomal subunit protein bS20 (Wolbachia sp. subsp. Drosophila simulans (strain wRi)).